Here is a 420-residue protein sequence, read N- to C-terminus: UDP-N-acetylmuramoylalanine--D-glutamate ligase (420 aa).

Gly-109–Thr-115 contacts ATP.

It belongs to the MurCDEF family.

It is found in the cytoplasm. The enzyme catalyses UDP-N-acetyl-alpha-D-muramoyl-L-alanine + D-glutamate + ATP = UDP-N-acetyl-alpha-D-muramoyl-L-alanyl-D-glutamate + ADP + phosphate + H(+). The protein operates within cell wall biogenesis; peptidoglycan biosynthesis. Functionally, cell wall formation. Catalyzes the addition of glutamate to the nucleotide precursor UDP-N-acetylmuramoyl-L-alanine (UMA). The sequence is that of UDP-N-acetylmuramoylalanine--D-glutamate ligase from Chlamydia abortus (strain DSM 27085 / S26/3) (Chlamydophila abortus).